The following is a 196-amino-acid chain: Pyridoxine/pyridoxamine 5'-phosphate oxidase (196 aa).

FMN is bound by residues 44–49, 59–60, arginine 65, lysine 66, and glutamine 88; these read RTVLLK and YT. Residue lysine 49 coordinates substrate. Substrate contacts are provided by tyrosine 106, arginine 110, and serine 114. Residues 123-124 and tryptophan 169 contribute to the FMN site; that span reads QS. 175-177 contributes to the substrate binding site; it reads RLH. Arginine 179 is a binding site for FMN.

This sequence belongs to the pyridoxamine 5'-phosphate oxidase family. Homodimer. It depends on FMN as a cofactor.

It carries out the reaction pyridoxamine 5'-phosphate + O2 + H2O = pyridoxal 5'-phosphate + H2O2 + NH4(+). The enzyme catalyses pyridoxine 5'-phosphate + O2 = pyridoxal 5'-phosphate + H2O2. Its pathway is cofactor metabolism; pyridoxal 5'-phosphate salvage; pyridoxal 5'-phosphate from pyridoxamine 5'-phosphate: step 1/1. It participates in cofactor metabolism; pyridoxal 5'-phosphate salvage; pyridoxal 5'-phosphate from pyridoxine 5'-phosphate: step 1/1. Its function is as follows. Catalyzes the oxidation of either pyridoxine 5'-phosphate (PNP) or pyridoxamine 5'-phosphate (PMP) into pyridoxal 5'-phosphate (PLP). This is Pyridoxine/pyridoxamine 5'-phosphate oxidase from Alkalilimnicola ehrlichii (strain ATCC BAA-1101 / DSM 17681 / MLHE-1).